We begin with the raw amino-acid sequence, 342 residues long: HTH-type transcriptional regulator GbpR (342 aa).

The 58-residue stretch at 16–73 (LKLRHLQLFVALDEHRNLHRAAASLTMSQPAASKLLGDLEESLGVTLFERHGRGVEPN) folds into the HTH lysR-type domain. The H-T-H motif DNA-binding region spans 33–52 (LHRAAASLTMSQPAASKLLG).

The protein belongs to the LysR transcriptional regulatory family.

In terms of biological role, does not seem to be required for sbpA expression. In Azospirillum brasilense, this protein is HTH-type transcriptional regulator GbpR (gbpR).